Here is a 205-residue protein sequence, read N- to C-terminus: MSQDQKPKVLEVSNLENQDAKWTSLKKIRWQDEKGKIRFWEMAERTTRSEANVDAVAILAIVPIDGSPHVLCQKQFRPPIGKFCIEIPAGLVDSKESCEDAAIRELREETGYVGTVMDSTTVMYNDPGLTNANLKIILADIDMSKPENQNPQQQLDDGEYIENFPIKLSSLQEELFSLEKKGFAIDVRLSTFALGLHAGLKYLSS.

One can recognise a Nudix hydrolase domain in the interval 51 to 189 (ANVDAVAILA…KKGFAIDVRL (139 aa)). The Nudix box motif lies at 90-111 (GLVDSKESCEDAAIRELREETG).

This sequence belongs to the Nudix hydrolase family.

It is found in the cytoplasm. The protein localises to the nucleus. This is an uncharacterized protein from Schizosaccharomyces pombe (strain 972 / ATCC 24843) (Fission yeast).